Reading from the N-terminus, the 105-residue chain is Met repressor (105 aa).

It belongs to the MetJ family. In terms of assembly, homodimer.

The protein localises to the cytoplasm. Its function is as follows. This regulatory protein, when combined with SAM (S-adenosylmethionine) represses the expression of the methionine regulon and of enzymes involved in SAM synthesis. This Vibrio vulnificus (strain CMCP6) protein is Met repressor.